We begin with the raw amino-acid sequence, 147 residues long: Sec-independent protein translocase protein TatB (147 aa).

Residues 2–22 traverse the membrane as a helical segment; sequence FDGIGFMELLLIGVLGLVVLG. The segment at 68-147 is disordered; sequence ESKGLSNLSP…DTRSNPKANG (80 aa). A compositionally biased stretch (polar residues) spans 71 to 97; the sequence is GLSNLSPELQESIDQLKQAAQSVNRPY. Positions 112-133 are enriched in low complexity; sequence PASQSVSSEASPTASSAPTSEP.

It belongs to the TatB family. The Tat system comprises two distinct complexes: a TatABC complex, containing multiple copies of TatA, TatB and TatC subunits, and a separate TatA complex, containing only TatA subunits. Substrates initially bind to the TatABC complex, which probably triggers association of the separate TatA complex to form the active translocon.

It is found in the cell inner membrane. In terms of biological role, part of the twin-arginine translocation (Tat) system that transports large folded proteins containing a characteristic twin-arginine motif in their signal peptide across membranes. Together with TatC, TatB is part of a receptor directly interacting with Tat signal peptides. TatB may form an oligomeric binding site that transiently accommodates folded Tat precursor proteins before their translocation. The chain is Sec-independent protein translocase protein TatB from Shewanella sp. (strain MR-4).